The following is a 726-amino-acid chain: Eukaryotic translation initiation factor 3 subunit B (726 aa).

The sufficient for interaction with HCR1 and TIF32 stretch occupies residues 1 to 94; the sequence is MSAALEDIKL…LFVECASPAD (94 aa). Positions 1-219 are sufficient for interaction with PIC8; it reads MSAALEDIKL…GVVMWGGPHF (219 aa). The RRM domain occupies 37-120; sequence QYIVVCGAPV…HRLFIYTMRD (84 aa). 7 WD repeats span residues 142–182, 186–224, 235–283, 331–374, 442–485, 505–549, and 566–611; these read FPTS…EESV, RKNW…RLRR, VSPS…LQST, LKVP…MSCK, ELKD…FAPE, ITDK…TDKN, and NSFP…VKEE.

Belongs to the eIF-3 subunit B family. In terms of assembly, component of the eukaryotic translation initiation factor 3 (eIF-3) complex.

Its subcellular location is the cytoplasm. RNA-binding component of the eukaryotic translation initiation factor 3 (eIF-3) complex, which is involved in protein synthesis of a specialized repertoire of mRNAs and, together with other initiation factors, stimulates binding of mRNA and methionyl-tRNAi to the 40S ribosome. The eIF-3 complex specifically targets and initiates translation of a subset of mRNAs involved in cell proliferation. The polypeptide is Eukaryotic translation initiation factor 3 subunit B (Vanderwaltozyma polyspora (strain ATCC 22028 / DSM 70294 / BCRC 21397 / CBS 2163 / NBRC 10782 / NRRL Y-8283 / UCD 57-17) (Kluyveromyces polysporus)).